A 327-amino-acid chain; its full sequence is Zinc transport protein ZntB (327 aa).

Residues 1–271 (MESFAGKELQ…AMNRRTYTMS (271 aa)) are Cytoplasmic-facing. Residues 272-292 (LLAMVFLPTTFLTGLFGVNLG) form a helical membrane-spanning segment. Residues 293–300 (GIPGGDAP) are Periplasmic-facing. A helical membrane pass occupies residues 301–321 (FGFFTFCLMLVILVGGVAWWL). The Cytoplasmic portion of the chain corresponds to 322-327 (KRSKWL).

It belongs to the CorA metal ion transporter (MIT) (TC 1.A.35) family.

It localises to the cell inner membrane. The catalysed reaction is Zn(2+)(out) + H(+)(out) = Zn(2+)(in) + H(+)(in). Functionally, zinc transporter. Acts as a Zn(2+):proton symporter, which likely mediates zinc ion uptake. The polypeptide is Zinc transport protein ZntB (Pectobacterium atrosepticum (strain SCRI 1043 / ATCC BAA-672) (Erwinia carotovora subsp. atroseptica)).